Reading from the N-terminus, the 279-residue chain is Pantothenate synthetase (279 aa).

26-33 (MGNLHEGH) provides a ligand contact to ATP. The active-site Proton donor is the histidine 33. Glutamine 57 contacts (R)-pantoate. Glutamine 57 serves as a coordination point for beta-alanine. 144–147 (GKKD) is an ATP binding site. A (R)-pantoate-binding site is contributed by glutamine 150. Residues valine 173 and 181 to 184 (LSSR) contribute to the ATP site.

Belongs to the pantothenate synthetase family. Homodimer.

It is found in the cytoplasm. It catalyses the reaction (R)-pantoate + beta-alanine + ATP = (R)-pantothenate + AMP + diphosphate + H(+). It participates in cofactor biosynthesis; (R)-pantothenate biosynthesis; (R)-pantothenate from (R)-pantoate and beta-alanine: step 1/1. In terms of biological role, catalyzes the condensation of pantoate with beta-alanine in an ATP-dependent reaction via a pantoyl-adenylate intermediate. This chain is Pantothenate synthetase, found in Burkholderia orbicola (strain MC0-3).